Reading from the N-terminus, the 369-residue chain is Dual specificity protein phosphatase 1-A (369 aa).

Residues 21-138 (RAHKCLILDC…FSAQCPEFCT (118 aa)) form the Rhodanese domain. A Phosphothreonine; by MAPK1 modification is found at T168. The Tyrosine-protein phosphatase domain maps to 175-316 (GPVEILPFLY…LLQFESQVLA (142 aa)). Catalysis depends on C260, which acts as the Phosphocysteine intermediate.

It belongs to the protein-tyrosine phosphatase family. Non-receptor class dual specificity subfamily. Phosphorylated by MAPK1/ERK2 at Thr-168 and at one or more serine residues in a progesterone-dependent manner. Phosphorylation reduces its rate of degradation but does not seem to affect phosphatase activity. As to expression, expressed in XIK-2 kidney cells.

The protein localises to the nucleus. The enzyme catalyses O-phospho-L-seryl-[protein] + H2O = L-seryl-[protein] + phosphate. It catalyses the reaction O-phospho-L-threonyl-[protein] + H2O = L-threonyl-[protein] + phosphate. It carries out the reaction O-phospho-L-tyrosyl-[protein] + H2O = L-tyrosyl-[protein] + phosphate. Functionally, dual specificity phosphatase that dephosphorylates MAP kinase MAPK1/ERK2 on both 'Thr-188' and 'Tyr-190', regulating its activity during the meiotic cell cycle. The chain is Dual specificity protein phosphatase 1-A from Xenopus laevis (African clawed frog).